A 265-amino-acid chain; its full sequence is Homeobox protein CDX-1 (265 aa).

The segment at lysine 9–arginine 152 is disordered. Pro residues predominate over residues tyrosine 30–proline 43. Positions alanine 73–phenylalanine 92 are enriched in low complexity. Over residues glycine 93–glycine 108 the composition is skewed to pro residues. A compositionally biased stretch (low complexity) spans glycine 110–glycine 126. The homeobox DNA-binding region spans lysine 154–asparagine 213. An interaction with DNA region spans residues tyrosine 157–tyrosine 178. The tract at residues arginine 196–alanine 207 is interaction with 5-mCpG DNA. The segment covering arginine 206–glutamine 217 has biased composition (basic residues). Residues arginine 206–proline 265 form a disordered region. Positions proline 245–proline 256 are enriched in polar residues.

The protein belongs to the Caudal homeobox family.

The protein resides in the nucleus. Its function is as follows. Plays a role in transcriptional regulation. Involved in activated KRAS-mediated transcriptional activation of PRKD1 in colorectal cancer (CRC) cells. Binds to the PRKD1 promoter in colorectal cancer (CRC) cells. Could play a role in the terminal differentiation of the intestine. Binds preferentially to methylated DNA. The polypeptide is Homeobox protein CDX-1 (CDX1) (Pongo pygmaeus (Bornean orangutan)).